The sequence spans 726 residues: DNA-directed RNA polymerase subunit beta N-terminal section (726 aa).

It belongs to the RNA polymerase beta chain family. In plastids the minimal PEP RNA polymerase catalytic core is composed of four subunits: alpha, beta, beta', and beta''. When a (nuclear-encoded) sigma factor is associated with the core the holoenzyme is formed, which can initiate transcription.

It is found in the plastid. The protein localises to the chloroplast. The catalysed reaction is RNA(n) + a ribonucleoside 5'-triphosphate = RNA(n+1) + diphosphate. DNA-dependent RNA polymerase catalyzes the transcription of DNA into RNA using the four ribonucleoside triphosphates as substrates. This chain is DNA-directed RNA polymerase subunit beta N-terminal section (rpoB1), found in Tetradesmus obliquus (Green alga).